The sequence spans 251 residues: Hydroxyacylglutathione hydrolase (251 aa).

His-53, His-55, Asp-57, His-58, His-110, Asp-127, and His-165 together coordinate Zn(2+).

It belongs to the metallo-beta-lactamase superfamily. Glyoxalase II family. In terms of assembly, monomer. The cofactor is Zn(2+).

It carries out the reaction an S-(2-hydroxyacyl)glutathione + H2O = a 2-hydroxy carboxylate + glutathione + H(+). It functions in the pathway secondary metabolite metabolism; methylglyoxal degradation; (R)-lactate from methylglyoxal: step 2/2. Its function is as follows. Thiolesterase that catalyzes the hydrolysis of S-D-lactoyl-glutathione to form glutathione and D-lactic acid. The sequence is that of Hydroxyacylglutathione hydrolase from Escherichia coli O17:K52:H18 (strain UMN026 / ExPEC).